Reading from the N-terminus, the 342-residue chain is Ribosomal RNA small subunit methyltransferase C (342 aa).

This sequence belongs to the methyltransferase superfamily. RsmC family. Monomer.

Its subcellular location is the cytoplasm. It carries out the reaction guanosine(1207) in 16S rRNA + S-adenosyl-L-methionine = N(2)-methylguanosine(1207) in 16S rRNA + S-adenosyl-L-homocysteine + H(+). In terms of biological role, specifically methylates the guanine in position 1207 of 16S rRNA in the 30S particle. The chain is Ribosomal RNA small subunit methyltransferase C from Salmonella paratyphi A (strain ATCC 9150 / SARB42).